Reading from the N-terminus, the 361-residue chain is Holliday junction branch migration complex subunit RuvB (361 aa).

Positions 1-25 are disordered; it reads MSIHTDDFGQGGFAQGGFPPDKAPD. Residues 5–207 form a large ATPase domain (RuvB-L) region; that stretch reads TDDFGQGGFA…FGIVARLEFY (203 aa). ATP is bound by residues Leu-46, Arg-47, Gly-88, Lys-91, Thr-92, Thr-93, 154 to 156, Arg-197, Tyr-207, and Arg-244; that span reads EDY. Thr-92 is a binding site for Mg(2+). Residues 208–278 form a small ATPAse domain (RuvB-S) region; sequence TAEELARIVR…LADRALAMLD (71 aa). The segment at 281-361 is head domain (RuvB-H); the sequence is PQGFDIMDRK…GLPVPGDDAS (81 aa). Arg-336 and Arg-341 together coordinate DNA.

The protein belongs to the RuvB family. In terms of assembly, homohexamer. Forms an RuvA(8)-RuvB(12)-Holliday junction (HJ) complex. HJ DNA is sandwiched between 2 RuvA tetramers; dsDNA enters through RuvA and exits via RuvB. An RuvB hexamer assembles on each DNA strand where it exits the tetramer. Each RuvB hexamer is contacted by two RuvA subunits (via domain III) on 2 adjacent RuvB subunits; this complex drives branch migration. In the full resolvosome a probable DNA-RuvA(4)-RuvB(12)-RuvC(2) complex forms which resolves the HJ.

It is found in the cytoplasm. The enzyme catalyses ATP + H2O = ADP + phosphate + H(+). Functionally, the RuvA-RuvB-RuvC complex processes Holliday junction (HJ) DNA during genetic recombination and DNA repair, while the RuvA-RuvB complex plays an important role in the rescue of blocked DNA replication forks via replication fork reversal (RFR). RuvA specifically binds to HJ cruciform DNA, conferring on it an open structure. The RuvB hexamer acts as an ATP-dependent pump, pulling dsDNA into and through the RuvAB complex. RuvB forms 2 homohexamers on either side of HJ DNA bound by 1 or 2 RuvA tetramers; 4 subunits per hexamer contact DNA at a time. Coordinated motions by a converter formed by DNA-disengaged RuvB subunits stimulates ATP hydrolysis and nucleotide exchange. Immobilization of the converter enables RuvB to convert the ATP-contained energy into a lever motion, pulling 2 nucleotides of DNA out of the RuvA tetramer per ATP hydrolyzed, thus driving DNA branch migration. The RuvB motors rotate together with the DNA substrate, which together with the progressing nucleotide cycle form the mechanistic basis for DNA recombination by continuous HJ branch migration. Branch migration allows RuvC to scan DNA until it finds its consensus sequence, where it cleaves and resolves cruciform DNA. The protein is Holliday junction branch migration complex subunit RuvB of Delftia acidovorans (strain DSM 14801 / SPH-1).